Reading from the N-terminus, the 102-residue chain is Small ribosomal subunit protein uS10 (102 aa).

Belongs to the universal ribosomal protein uS10 family. Part of the 30S ribosomal subunit.

Its function is as follows. Involved in the binding of tRNA to the ribosomes. This chain is Small ribosomal subunit protein uS10, found in Cereibacter sphaeroides (strain ATCC 17029 / ATH 2.4.9) (Rhodobacter sphaeroides).